The following is a 365-amino-acid chain: Protein RecA (365 aa).

73–80 is an ATP binding site; sequence GPESSGKT.

The protein belongs to the RecA family.

The protein resides in the cytoplasm. Its function is as follows. Can catalyze the hydrolysis of ATP in the presence of single-stranded DNA, the ATP-dependent uptake of single-stranded DNA by duplex DNA, and the ATP-dependent hybridization of homologous single-stranded DNAs. It interacts with LexA causing its activation and leading to its autocatalytic cleavage. In Prochlorococcus marinus (strain AS9601), this protein is Protein RecA.